The sequence spans 60 residues: Homeobox protein engrailed-like (60 aa).

A DNA-binding region (homeobox) is located at residues 1–41 (GEQLCRLRAEFQASRYLTEERRTALARELRLNEAQIKIWFQ).

The protein belongs to the engrailed homeobox family.

It is found in the nucleus. The protein is Homeobox protein engrailed-like of Lampetra planeri (Brook lamprey).